The primary structure comprises 85 residues: U4-theraphotoxin-Hhn1u (85 aa).

An N-terminal signal peptide occupies residues 1 to 22 (MKMTLIAILTCAAVLVLHTTAA). Positions 23 to 48 (EELEAESQLMEVGMPDTELEAVDEER) are excised as a propeptide. Disulfide bonds link cysteine 52–cysteine 66, cysteine 56–cysteine 77, and cysteine 71–cysteine 82.

This sequence belongs to the neurotoxin 12 (Hwtx-2) family. 02 (Hwtx-2) subfamily. As to expression, expressed by the venom gland.

The protein localises to the secreted. Postsynaptic neurotoxin. This is U4-theraphotoxin-Hhn1u from Cyriopagopus hainanus (Chinese bird spider).